Reading from the N-terminus, the 99-residue chain is MAEGGFDPCECVCSHEHAMRRLINLLRQSQSYCTDTECLQELPGPSGDNGISVTMILVAWMVIALILFLLRPPNLRGSNLPGKPTSPHNGQDPPAPPVD.

Residues 1 to 49 lie on the Lumenal side of the membrane; that stretch reads MAEGGFDPCECVCSHEHAMRRLINLLRQSQSYCTDTECLQELPGPSGDN. A helical transmembrane segment spans residues 50–70; it reads GISVTMILVAWMVIALILFLL. At 71 to 99 the chain is on the cytoplasmic side; the sequence is RPPNLRGSNLPGKPTSPHNGQDPPAPPVD. Residues 77–99 are disordered; sequence GSNLPGKPTSPHNGQDPPAPPVD.

It localises to the endoplasmic reticulum membrane. This is Small integral membrane protein 14 (SMIM14) from Pongo abelii (Sumatran orangutan).